A 127-amino-acid polypeptide reads, in one-letter code: Small ribosomal subunit protein uS12 (127 aa).

The residue at position 89 (D89) is a 3-methylthioaspartic acid. The interval 102-127 is disordered; the sequence is LDTAGVKDRKQGRSKYGTKRPKEAKK. Residues 113–127 show a composition bias toward basic residues; it reads GRSKYGTKRPKEAKK.

This sequence belongs to the universal ribosomal protein uS12 family. Part of the 30S ribosomal subunit. Contacts proteins S8 and S17. May interact with IF1 in the 30S initiation complex.

Functionally, with S4 and S5 plays an important role in translational accuracy. In terms of biological role, interacts with and stabilizes bases of the 16S rRNA that are involved in tRNA selection in the A site and with the mRNA backbone. Located at the interface of the 30S and 50S subunits, it traverses the body of the 30S subunit contacting proteins on the other side and probably holding the rRNA structure together. The combined cluster of proteins S8, S12 and S17 appears to hold together the shoulder and platform of the 30S subunit. This Nostoc punctiforme (strain ATCC 29133 / PCC 73102) protein is Small ribosomal subunit protein uS12.